A 332-amino-acid polypeptide reads, in one-letter code: Ubiquinol oxidase 1a, mitochondrial (332 aa).

The N-terminal 54 residues, M1–M54, are a transit peptide targeting the mitochondrion. The helical transmembrane segment at A157–L177 threads the bilayer. Fe cation is bound by residues E161, E200, and H203. The helical transmembrane segment at A219–S239 threads the bilayer. Fe cation-binding residues include E251, E302, and H305.

Belongs to the alternative oxidase family. Homodimer; disulfide-linked. Fe cation serves as cofactor. In terms of tissue distribution, expressed in roots, leaf sheaths and leaf blades.

It is found in the mitochondrion inner membrane. The enzyme catalyses 2 a ubiquinol + O2 = 2 a ubiquinone + 2 H2O. Its function is as follows. Catalyzes the cyanide-resistant oxidation of ubiquinol and the reduction of molecular oxygen to water, but does not translocate protons and consequently is not linked to oxidative phosphorylation. May increase respiration when the cytochrome respiratory pathway is restricted, or in response to low temperatures. The sequence is that of Ubiquinol oxidase 1a, mitochondrial from Oryza sativa subsp. japonica (Rice).